Consider the following 201-residue polypeptide: Protein TraJ (201 aa).

The protein localises to the cytoplasm. In terms of biological role, this protein is essential for positively regulating the expression of transfer genes that are involved in the conjugal transfer of DNA between bacterial cells. The protein is Protein TraJ (traJ) of Escherichia coli.